The sequence spans 944 residues: Trehalose monomycolate exporter MmpL3 (944 aa).

The Cytoplasmic portion of the chain corresponds to 1-13 (MFAWWGRTVYRYR). The helical transmembrane segment at 14–34 (FIVIGVMVALCLGGGVFGLSL) threads the bilayer. Residues 35–185 (GKHVTQSGFY…TIATDQRRME (151 aa)) lie on the Periplasmic side of the membrane. 40 to 44 (QSGFY) contributes to the a 1,2-diacylglycero-3-phosphoethanolamine binding site. Residues 186–206 (VLALPLVAVVLFFVFGGVIAA) form a helical membrane-spanning segment. At 207–209 (GLP) the chain is on the cytoplasmic side. Residues 210-230 (VMVGGLCIAGALGIMRFLAIF) traverse the membrane as a helical segment. At 231–235 (GPVHY) the chain is on the periplasmic side. A helical membrane pass occupies residues 236–256 (FAQPVVSLIGLGIAIDYGLFI). The Cytoplasmic segment spans residues 257–286 (VSRFREEIAEGYDTETAVRRTVITAGRTVT). A helical transmembrane segment spans residues 287 to 307 (FSAVLIVASAIGLLLFPQGFL). At 308-314 (KSLTYAT) the chain is on the periplasmic side. Residues 315-335 (IASVMLSAILSITVLPACLGI) form a helical membrane-spanning segment. Topologically, residues 336 to 396 (LGKHVDALGV…KLVNRVMKRP (61 aa)) are cytoplasmic. Residues 397–417 (VLFAAPIVIIMILLIIPVGKL) traverse the membrane as a helical segment. The Periplasmic segment spans residues 418–562 (SLGGISEKYL…HGLFAKMPLM (145 aa)). The helical transmembrane segment at 563–583 (VVILLTTTIVLMFLAFGSVVL) threads the bilayer. At 584–586 (PIK) the chain is on the cytoplasmic side. Residues 587 to 607 (ATLMSALTLGSTMGILTWIFV) traverse the membrane as a helical segment. Residues 608–616 (DGHFSKWLN) are Periplasmic-facing. Residues 617–637 (FTPTPLTAPVIGLIIALVFGL) form a helical membrane-spanning segment. At 638–672 (STDYEVFLVSRMVEARERGMSTQEAIRIGTAATGR) the chain is on the cytoplasmic side. Residues 673 to 693 (IITAAALIVAVVAGAFVFSDL) form a helical membrane-spanning segment. Residues 694 to 698 (VMMKY) are Periplasmic-facing. The helical transmembrane segment at 699-719 (LAFGLMAALLLDATVVRMFLV) threads the bilayer. Topologically, residues 720–944 (PSVMKLLGDD…QDLLRREGRL (225 aa)) are cytoplasmic. Residues 778–944 (AAGDPRPPHD…QDLLRREGRL (167 aa)) are disordered. Residues 791–828 (PLAESPRPARSSPASSPELTPALEATAAPAAPSGASTT) are compositionally biased toward low complexity. The segment covering 829-839 (RMQIGSSTEPP) has biased composition (polar residues). Residues 855-866 (STPPPTPTPPSA) show a composition bias toward pro residues.

This sequence belongs to the resistance-nodulation-cell division (RND) (TC 2.A.6) family. MmpL subfamily. In terms of assembly, monomer. Interacts with TtfA (via N-terminus); active trehalose monomycolate (TMM) biosynthesis is not required for the complex formation.

The protein localises to the cell inner membrane. Its subcellular location is the cell septum. It is found in the cell tip. Functionally, transports trehalose monomycolate (TMM) to the cell wall. Flips TMM across the inner membrane. Membrane potential is not required for this function. Transports probably phosphatidylethanolamine (PE) as well. Binds specifically both TMM and PE, but not trehalose dimycolate (TDM). Also binds diacylglycerol (DAG) and other phospholipids, including phosphatidylglycerol (PG), phosphatidylinositol (PI), and cardiolipin (CDL). Contributes to membrane potential, cell wall composition, antibiotic susceptibility and fitness. Could also be part of a heme-iron acquisition system. This is Trehalose monomycolate exporter MmpL3 (mmpL3) from Mycobacterium tuberculosis (strain CDC 1551 / Oshkosh).